The following is an 882-amino-acid chain: Envelope glycoprotein gp160 (882 aa).

An N-terminal signal peptide occupies residues 1-22; that stretch reads MGCLGNQLLIAILLLSVYGIYC. Residues 23-697 are Extracellular-facing; sequence IQYVTVFYGV…TSWIKYIQYG (675 aa). N-linked (GlcNAc...) asparagine; by host glycosylation is present at asparagine 37. A disulfide bridge links cysteine 44 with cysteine 57. 19 N-linked (GlcNAc...) asparagine; by host glycosylation sites follow: asparagine 70, asparagine 114, asparagine 149, asparagine 159, asparagine 174, asparagine 187, asparagine 201, asparagine 205, asparagine 215, asparagine 247, asparagine 250, asparagine 257, asparagine 281, asparagine 287, asparagine 298, asparagine 309, asparagine 319, asparagine 374, and asparagine 380. 5 disulfide bridges follow: cysteine 101–cysteine 223, cysteine 108–cysteine 214, cysteine 113–cysteine 171, cysteine 236–cysteine 266, and cysteine 246–cysteine 258. A V1 region spans residues 113–170; the sequence is CNKSETDKWGLTKSSTTTASTTTTTTAKSVETRDIVNETSPCVVHDNCTGLEQEPMIS. The V2 stretch occupies residues 171 to 214; the sequence is CKFNMTGLKRDKKKEYNETWYSADLVCEQGNSTGNESRCYMNHC. The interval 314–346 is V3; it reads CRRPGNKTVLPVTIMSALVFHSQPVNERPKQAW. An intrachain disulfide couples cysteine 314 to cysteine 347. Intrachain disulfides connect cysteine 398–cysteine 462 and cysteine 405–cysteine 435. The segment at 405–435 is V4; the sequence is CKMNWFLNWVEDRSLTTQKPKERHKRNYVPC. Residues asparagine 463, asparagine 474, and asparagine 479 are each glycosylated (N-linked (GlcNAc...) asparagine; by host). A V5 region spans residues 478–485; sequence GNQTSITM. Positions 529–549 are fusion peptide; that stretch reads GVFVLGFLGFLATAGSAMGAA. An immunosuppression region spans residues 592 to 608; that stretch reads LQTRVSAIEKYLKDQAQ. N-linked (GlcNAc...) asparagine; by host glycosylation is found at asparagine 628, asparagine 637, and asparagine 653. The stretch at 637–669 forms a coiled coil; sequence NETWQEWERKVDFLEANITALLEEAQIQQEKNM. An MPER; binding to GalCer region spans residues 674 to 695; that stretch reads KLNSWDVFGNWFDLTSWIKYIQ. Residues 698-718 traverse the membrane as a helical segment; that stretch reads IYIIVGVILLRIVIYIVQMLA. Topologically, residues 719–882 are cytoplasmic; sequence RLRQGYRPVF…IRQGLELTLL (164 aa). Positions 724–727 match the YXXV motif; contains endocytosis signal motif; sequence YRPV. Residues 738–761 form a disordered region; the sequence is THTQQDPALPTKEGKKGDGGGSGG. A lipid anchor (S-palmitoyl cysteine; by host) is attached at cysteine 790. Positions 881 to 882 match the Di-leucine internalization motif motif; sequence LL.

The mature envelope protein (Env) consists of a homotrimer of non-covalently associated gp120-gp41 heterodimers. The resulting complex protrudes from the virus surface as a spike. Interacts with host CD4 and CCR5. Gp120 also interacts with the C-type lectins CD209/DC-SIGN and CLEC4M/DC-SIGNR (collectively referred to as DC-SIGN(R)). In terms of assembly, the mature envelope protein (Env) consists of a homotrimer of non-covalently associated gp120-gp41 heterodimers. The resulting complex protrudes from the virus surface as a spike. Specific enzymatic cleavages in vivo yield mature proteins. Envelope glycoproteins are synthesized as an inactive precursor that is heavily N-glycosylated and processed likely by host cell furin in the Golgi to yield the mature SU and TM proteins. The cleavage site between SU and TM requires the minimal sequence [KR]-X-[KR]-R. In terms of processing, palmitoylation of the transmembrane protein and of Env polyprotein (prior to its proteolytic cleavage) is essential for their association with host cell membrane lipid rafts. Palmitoylation is therefore required for envelope trafficking to classical lipid rafts, but not for viral replication.

The protein localises to the virion membrane. The protein resides in the host cell membrane. It localises to the host endosome membrane. Its function is as follows. The surface protein gp120 (SU) attaches the virus to the host lymphoid cell by binding to the primary receptor CD4. This interaction induces a structural rearrangement creating a high affinity binding site for a chemokine coreceptor like CCR5. This peculiar 2 stage receptor-interaction strategy allows gp120 to maintain the highly conserved coreceptor-binding site in a cryptic conformation, protected from neutralizing antibodies. These changes are transmitted to the transmembrane protein gp41 and are thought to activate its fusogenic potential by unmasking its fusion peptide. In terms of biological role, surface protein gp120 (SU) may target the virus to gut-associated lymphoid tissue (GALT) by binding host ITGA4/ITGB7 (alpha-4/beta-7 integrins), a complex that mediates T-cell migration to the GALT. Interaction between gp120 and ITGA4/ITGB7 would allow the virus to enter GALT early in the infection, infecting and killing most of GALT's resting CD4+ T-cells. This T-cell depletion is believed to be the major insult to the host immune system leading to AIDS. The surface protein gp120 is a ligand for CD209/DC-SIGN and CLEC4M/DC-SIGNR, which are respectively found on dendritic cells (DCs), and on endothelial cells of liver sinusoids and lymph node sinuses. These interactions allow capture of viral particles at mucosal surfaces by these cells and subsequent transmission to permissive cells. DCs are professional antigen presenting cells, critical for host immunity by inducing specific immune responses against a broad variety of pathogens. They act as sentinels in various tissues where they take up antigen, process it, and present it to T-cells following migration to lymphoid organs. SIV subverts the migration properties of dendritic cells to gain access to CD4+ T-cells in lymph nodes. Virus transmission to permissive T-cells occurs either in trans (without DCs infection, through viral capture and transmission), or in cis (following DCs productive infection, through the usual CD4-gp120 interaction), thereby inducing a robust infection. In trans infection, bound virions remain infectious over days and it is proposed that they are not degraded, but protected in non-lysosomal acidic organelles within the DCs close to the cell membrane thus contributing to the viral infectious potential during DCs' migration from the periphery to the lymphoid tissues. On arrival at lymphoid tissues, intact virions recycle back to DCs' cell surface allowing virus transmission to CD4+ T-cells. Virion capture also seems to lead to MHC-II-restricted viral antigen presentation, and probably to the activation of SIV-specific CD4+ cells. Functionally, the transmembrane protein gp41 (TM) acts as a class I viral fusion protein. Under the current model, the protein has at least 3 conformational states: pre-fusion native state, pre-hairpin intermediate state, and post-fusion hairpin state. During fusion of viral and target intracellular membranes, the coiled coil regions (heptad repeats) assume a trimer-of-hairpins structure, positioning the fusion peptide in close proximity to the C-terminal region of the ectodomain. The formation of this structure appears to drive apposition and subsequent fusion of viral and target cell membranes. Complete fusion occurs in host cell endosomes. The virus undergoes clathrin-dependent internalization long before endosomal fusion, thus minimizing the surface exposure of conserved viral epitopes during fusion and reducing the efficacy of inhibitors targeting these epitopes. Membranes fusion leads to delivery of the nucleocapsid into the cytoplasm. Its function is as follows. The envelope glycoprotein gp160 precursor down-modulates cell surface CD4 antigen by interacting with it in the endoplasmic reticulum and blocking its transport to the cell surface. In terms of biological role, the gp120-gp41 heterodimer allows rapid transcytosis of the virus through CD4 negative cells such as simple epithelial monolayers of the intestinal, rectal and endocervical epithelial barriers. Both gp120 and gp41 specifically recognize glycosphingolipids galactosyl-ceramide (GalCer) or 3' sulfo-galactosyl-ceramide (GalS) present in the lipid rafts structures of epithelial cells. Binding to these alternative receptors allows the rapid transcytosis of the virus through the epithelial cells. This transcytotic vesicle-mediated transport of virions from the apical side to the basolateral side of the epithelial cells does not involve infection of the cells themselves. The chain is Envelope glycoprotein gp160 (env) from Simian immunodeficiency virus (isolate Mm142-83) (SIV-mac).